A 648-amino-acid polypeptide reads, in one-letter code: Centrosomal protein of 63 kDa-B (648 aa).

Coiled coils occupy residues 19–188 (DSCE…QSHN) and 222–555 (EEEL…DAAS). Residue Ser559 is modified to Phosphoserine; by atm and atr. The stretch at 611 to 644 (FLQEEEQRSHELLQRLNAHIEELKQESQRTVEHF) forms a coiled coil.

The protein belongs to the CEP63 family. In terms of processing, phosphorylation at Ser-559 by atm and atr promotes its delocalization from the centrosome and impairs its ability to promote centrosome dependent spindle assembly.

It localises to the cytoplasm. The protein resides in the cytoskeleton. It is found in the microtubule organizing center. Its subcellular location is the centrosome. The protein localises to the centriole. In terms of biological role, required for normal spindle assembly. Plays a key role in mother-centriole-dependent centriole duplication. Plays a role in DNA damage response. Following DNA damage, such as double-strand breaks (DSBs), is removed from centrosomes; this leads to the inactivation of spindle assembly and delay in mitotic progression. The chain is Centrosomal protein of 63 kDa-B (cep63-b) from Xenopus laevis (African clawed frog).